A 333-amino-acid polypeptide reads, in one-letter code: Holliday junction branch migration complex subunit RuvB (333 aa).

The large ATPase domain (RuvB-L) stretch occupies residues 1–181 (MARILDNDLL…FGINGHMEYY (181 aa)). Residues Leu-20, Arg-21, Gly-62, Lys-65, Thr-66, Thr-67, 128–130 (EDY), Arg-171, Tyr-181, and Arg-218 each bind ATP. Thr-66 lines the Mg(2+) pocket. The interval 130–148 (YYIDIMIGAGETSRSVHLD) is presensor-1 beta-hairpin. The segment at 182 to 252 (ELPDLTEIVE…IADQALTMLD (71 aa)) is small ATPAse domain (RuvB-S). The segment at 255 to 333 (HEGLDYVDQK…HMGYDYTRDN (79 aa)) is head domain (RuvB-H). DNA contacts are provided by Arg-291, Arg-310, Arg-312, and Arg-315.

Belongs to the RuvB family. As to quaternary structure, homohexamer. Forms an RuvA(8)-RuvB(12)-Holliday junction (HJ) complex. HJ DNA is sandwiched between 2 RuvA tetramers; dsDNA enters through RuvA and exits via RuvB. Only 4 subunits contact one DNA strand at any time. Two adjacent subunits are contacted by domain III of RuvA. An RuvB hexamer assembles on each DNA strand where it exits the tetramer. Each RuvB hexamer is contacted by two RuvA subunits (via domain III) on 2 adjacent RuvB subunits; this complex drives branch migration. In the full resolvosome a probable DNA-RuvA(4)-RuvB(12)-RuvC(2) complex forms which resolves the HJ.

The protein localises to the cytoplasm. The catalysed reaction is ATP + H2O = ADP + phosphate + H(+). With respect to regulation, binding of domain III of RuvA to a single subunit of the RuvB hexamer activates the ATPase 2 subunits away and nucleotide exchange in the adjacent subunit. Its function is as follows. The RuvA-RuvB-RuvC complex processes Holliday junction (HJ) DNA during genetic recombination and DNA repair, while the RuvA-RuvB complex plays an important role in the rescue of blocked DNA replication forks via replication fork reversal (RFR). Catalyzes branch migration on Holliday junction (HJ) DNA in complex with RuvA from S.typhimurim and ATP. RuvA specifically binds to HJ cruciform DNA, conferring on it an open structure. The RuvB hexamer acts as an ATP-dependent pump, pulling dsDNA into and through the RuvAB complex. Forms 2 homohexamers on either side of HJ DNA bound by 1 or 2 RuvA tetramers; 4 subunits per hexamer contact DNA at a time. Coordinated motions by a converter formed by DNA-disengaged RuvB subunits stimulates ATP hydrolysis and nucleotide exchange. Immobilization of the converter enables RuvB to convert the ATP-contained energy into a lever motion, pulling 2 nucleotides of DNA out of the RuvA tetramer per ATP hydrolyzed, thus driving DNA branch migration. The RuvB motors rotate together with the DNA substrate, which together with the progressing nucleotide cycle forms the mechanistic basis for DNA recombination by continuous branch migration. Branch migration allows RuvC to scan DNA until it finds its consensus sequence, where it cleaves and resolves cruciform DNA. This is Holliday junction branch migration complex subunit RuvB from Streptococcus thermophilus (strain ATCC BAA-250 / LMG 18311).